A 96-amino-acid chain; its full sequence is Exopolysaccharide production repressor protein (96 aa).

2 helical membrane passes run 6–26 and 35–55; these read FVVSMLGALAAFAIATYFLTG and TLLCAVLIQVGYFLAVLFLVW. The segment at 64–96 is disordered; sequence LSPGQLPADPTNDEKQTGKLSLRRLNRPPHFNS.

It localises to the cell membrane. It participates in glycan metabolism; exopolysaccharide biosynthesis. Inhibition of exopolysaccharide synthesis (EPS) and nodulation ability (NOD). This is Exopolysaccharide production repressor protein (exoX) from Sinorhizobium fredii (strain NBRC 101917 / NGR234).